A 648-amino-acid polypeptide reads, in one-letter code: RAF proto-oncogene serine/threonine-protein kinase (648 aa).

Ser-29 is modified (phosphoserine; by MAPK1). Residue Ser-43 is modified to Phosphoserine; by PKA and MAPK1. The RBD domain maps to 56–131 (NTIRVFLPNK…IGEELQVDFL (76 aa)). Residues 138-184 (THNFARKTFLKLAFCDICQKFLLNGFRCQTCGYKFHEHCSTKVPTMC) form a Phorbol-ester/DAG-type zinc finger. 8 residues coordinate Zn(2+): His-139, Cys-152, Cys-155, Cys-165, Cys-168, His-173, Cys-176, and Cys-184. Residues 220–334 (SVSRMPVSSQ…QEKNKIRPRG (115 aa)) form a disordered region. Positions 239–271 (TFNTSSPSSEGSLSQRQRSTSTPNVHMVSTTLP) are enriched in polar residues. Ser-252 is modified (phosphoserine). Position 259 is a phosphoserine; by PKA, PKC and PKB/AKT1 (Ser-259). Residue Thr-268 is modified to Phosphothreonine; by autocatalysis. The residue at position 269 (Thr-269) is a Phosphothreonine; by PKA. Residues 275–285 (RMIEDAIRSHS) show a composition bias toward basic and acidic residues. A compositionally biased stretch (low complexity) spans 286-301 (ESASPSALSSSPNNLS). At Ser-289 the chain carries Phosphoserine; by MAPK1. Ser-296 is modified (phosphoserine). A Phosphoserine; by MAPK1 modification is found at Ser-301. Residues 331–349 (RPRGQRDSSYYWEIEASEV) form an interaction with PEBP1/RKIP region. A Phosphoserine; by PAK1, PAK2, PAK3 and PAK5 modification is found at Ser-338. Phosphoserine; by PAK1, PAK2 and PAK3 is present on Ser-339. Residues Tyr-340 and Tyr-341 each carry the phosphotyrosine; by SRC modification. Residues 349-609 (VMLSTRIGSG…PQILSSIELL (261 aa)) enclose the Protein kinase domain. Residues 355 to 363 (IGSGSFGTV) and Lys-375 each bind ATP. Residue Asp-468 is the Proton acceptor of the active site. Phosphoserine is present on Ser-471. Thr-491 carries the post-translational modification Phosphothreonine. Phosphoserine is present on Ser-494. The residue at position 499 (Ser-499) is a Phosphoserine; by PKC. Arg-563 carries the post-translational modification Symmetric dimethylarginine; by PRMT5. Residue Ser-621 is modified to Phosphoserine. Ser-642 carries the post-translational modification Phosphoserine; by MAPK1.

It belongs to the protein kinase superfamily. TKL Ser/Thr protein kinase family. RAF subfamily. In terms of assembly, monomer. Homodimer. Heterodimerizes with BRAF and this heterodimer possesses a highly increased kinase activity compared to the respective homodimers or monomers. Heterodimerization is mitogen-regulated and enhanced by 14-3-3 proteins. MAPK1/ERK2 activation can induce a negative feedback that promotes the dissociation of the heterodimer. Forms a multiprotein complex with Ras (M-Ras/MRAS), SHOC2 and protein phosphatase 1 (PPP1CA, PPP1CB and PPP1CC). Interacts with LZTR1. Interacts with Ras proteins; the interaction is antagonized by RIN1. Weakly interacts with RIT1. Interacts (via N-terminus) with RGS14 (via RBD domains); the interaction mediates the formation of a ternary complex with BRAF, a ternary complex inhibited by GNAI1. Probably forms a complex composed of chaperones HSP90 and HSP70, co-chaperones CDC37, PPP5C, TSC1 and client protein TSC2, CDK4, AKT, RAF1 and NR3C1; this complex does not contain co-chaperones STIP1/HOP and PTGES3/p23. Interacts with STK3/MST2; the interaction inhibits its pro-apoptotic activity. Interacts (when phosphorylated at Ser-259) with YWHAZ (unphosphorylated at 'Thr-232'). Interacts with MAP2K1/MEK1 and MAP2K2/MEK2. Interacts with MAP3K5/ASF1 (via N-terminus) and this interaction inhibits the proapoptotic function of MAP3K5/ASK1. Interacts with PAK1 (via kinase domain). The phosphorylated form interacts with PIN1. The Ser-338 and Ser-339 phosphorylated form (by PAK1) interacts with BCL2. Interacts with PEBP1/RKIP and this interaction is enhanced if RAF1 is phosphorylated on residues Ser-338, Ser-339, Tyr-340 and Tyr-341. Interacts with ADCY2, ADCY5, ADCY6, DGKH, RCAN1/DSCR1, PPP1R12A, PKB/AKT1, PPP2CA, PPP2R1B, SPRY2, SPRY4, CNKSR1/CNK1, KSR2 and PHB/prohibitin. Interacts with ROCK2. In its active form, interacts with PRMT5. Interacts with FAM83B; displaces 14-3-3 proteins from RAF1 and activates RAF1. Interacts with PDE8A; the interaction promotes RAF1 activity. Interacts with MFHAS1. Interacts with GLS. Interacts with NEK10 and MAP2K1; the interaction is direct with NEK10 and required for ERK1/2-signaling pathway activation in response to UV irradiation. Zn(2+) is required as a cofactor. In terms of processing, phosphorylation at Thr-269, Ser-338, Tyr-341, Thr-491 and Ser-494 results in its activation. Phosphorylation at Ser-29, Ser-43, Ser-289, Ser-296, Ser-301 and Ser-642 by MAPK1/ERK2 results in its inactivation. Phosphorylation at Ser-259 induces the interaction with YWHAZ and inactivates kinase activity. Dephosphorylation of Ser-259 by the SHOC2-MRAS-PP1c (SMP) complex consisting of SHOC2, GTP-bound M-Ras/MRAS and the catalytic subunit of protein phosphatase 1 (PPP1CA, PPP1CB or PPP1CC); this relieves inactivation and stimulates kinase activity. Phosphorylation at Ser-338 by PAK1 and PAK5 and Ser-339 by PAK1 is required for its mitochondrial localization. Phosphorylation at Ser-621 in response to growth factor treatment stabilizes the protein, possibly by preventing proteasomal degradation. Phosphorylation at Ser-289, Ser-296, Ser-301, Ser-338 and Ser-621 are somehow linked to the methylation potential of cells. Treatment of cells with HGF in the presence of the methylation inhibitor 5'-methylthioadenosine (MTA) results in increased phosphorylation at Ser-338 and Ser-621 and decreased phosphorylation at Ser-296, Ser-301 and Ser-338. Dephosphorylation at Ser-338 by PPP5C results in an activity decrease. Methylated at Arg-563 in response to EGF treatment. This modification leads to destabilization of the protein, possibly through proteasomal degradation. As to expression, in skeletal muscle, isoform 1 is more abundant than isoform 2.

It is found in the cytoplasm. It localises to the cell membrane. Its subcellular location is the mitochondrion. The protein localises to the nucleus. The enzyme catalyses L-seryl-[protein] + ATP = O-phospho-L-seryl-[protein] + ADP + H(+). It catalyses the reaction L-threonyl-[protein] + ATP = O-phospho-L-threonyl-[protein] + ADP + H(+). With respect to regulation, regulation is a highly complex process involving membrane recruitment, protein-protein interactions, dimerization, and phosphorylation/dephosphorylation events. Ras-GTP recruits RAF1 to the membrane, thereby promoting its activation. The inactive conformation of RAF1 is maintained by autoinhibitory interactions occurring between the N-terminal regulatory and the C-terminal catalytic domains and by the binding of a 14-3-3 protein that contacts two phosphorylation sites, Ser-259 and Ser-621. Upon mitogenic stimulation, Ras and PPP2R1A cooperate to release autoinhibition and the subsequent phosphorylation of activating sites: Ser-338, Tyr-341, Thr-491, and Ser-494, yields a fully active kinase. Through a negative feedback mechanism involving MAPK1/ERK2, RAF1 is phosphorylated on Ser-29, Ser-43, Ser-289, Ser-296, Ser-301 and Ser-642 by MAPK1/ERK2, which yields an inactive, desensitized kinase. The signaling-competent conformation of RAF1 is finally re-established by the coordinated action of PIN1, a prolyl isomerase that converts pSer and pThr residues from the cis to the trans conformation, which is preferentially recognized and dephosphorylated by PPP2R1A. Activated by homodimerization and heterodimerization (with BRAF). Also regulated through association with other proteins such as KSR2, CNKSR1/CNK1, PEBP1/RKIP, PHB/prohibitin and SPRY4. PEBP1/RKIP acts by dissociating RAF1 from its substrates MAP2K1/MEK1 and MAP2K2/MEK2. PHB/prohibitin facilitates the displacement of 14-3-3 from RAF1 by activated Ras, thereby promoting cell membrane localization and phosphorylation of RAF1 at the activating Ser-338. SPRY4 inhibits Ras-independent, but not Ras-dependent, activation of RAF1. CNKSR1/CNK1 regulates Src-mediated RAF1 activation. Functionally, serine/threonine-protein kinase that acts as a regulatory link between the membrane-associated Ras GTPases and the MAPK/ERK cascade, and this critical regulatory link functions as a switch determining cell fate decisions including proliferation, differentiation, apoptosis, survival and oncogenic transformation. RAF1 activation initiates a mitogen-activated protein kinase (MAPK) cascade that comprises a sequential phosphorylation of the dual-specific MAPK kinases (MAP2K1/MEK1 and MAP2K2/MEK2) and the extracellular signal-regulated kinases (MAPK3/ERK1 and MAPK1/ERK2). The phosphorylated form of RAF1 (on residues Ser-338 and Ser-339, by PAK1) phosphorylates BAD/Bcl2-antagonist of cell death at 'Ser-75'. Phosphorylates adenylyl cyclases: ADCY2, ADCY5 and ADCY6, resulting in their activation. Phosphorylates PPP1R12A resulting in inhibition of the phosphatase activity. Phosphorylates TNNT2/cardiac muscle troponin T. Can promote NF-kB activation and inhibit signal transducers involved in motility (ROCK2), apoptosis (MAP3K5/ASK1 and STK3/MST2), proliferation and angiogenesis (RB1). Can protect cells from apoptosis also by translocating to the mitochondria where it binds BCL2 and displaces BAD/Bcl2-antagonist of cell death. Regulates Rho signaling and migration, and is required for normal wound healing. Plays a role in the oncogenic transformation of epithelial cells via repression of the TJ protein, occludin (OCLN) by inducing the up-regulation of a transcriptional repressor SNAI2/SLUG, which induces down-regulation of OCLN. Restricts caspase activation in response to selected stimuli, notably Fas stimulation, pathogen-mediated macrophage apoptosis, and erythroid differentiation. The protein is RAF proto-oncogene serine/threonine-protein kinase of Homo sapiens (Human).